Here is a 200-residue protein sequence, read N- to C-terminus: Lipopolysaccharide core heptose(II)-phosphate phosphatase (200 aa).

The N-terminal stretch at 1–25 is a signal peptide; sequence MLAFCRSSLKSKKYFIILLALAAIA.

It belongs to the phosphoglycerate mutase family. Ais subfamily.

It localises to the periplasm. It functions in the pathway bacterial outer membrane biogenesis; lipopolysaccharide metabolism. Functionally, catalyzes the dephosphorylation of heptose(II) of the outer membrane lipopolysaccharide core. The protein is Lipopolysaccharide core heptose(II)-phosphate phosphatase of Escherichia coli O17:K52:H18 (strain UMN026 / ExPEC).